A 535-amino-acid polypeptide reads, in one-letter code: Bifunctional purine biosynthesis protein PurH (535 aa).

The 146-residue stretch at 6 to 151 (TRLPVRRALI…KNHKDVAIVV (146 aa)) folds into the MGS-like domain.

The protein belongs to the PurH family.

The enzyme catalyses (6R)-10-formyltetrahydrofolate + 5-amino-1-(5-phospho-beta-D-ribosyl)imidazole-4-carboxamide = 5-formamido-1-(5-phospho-D-ribosyl)imidazole-4-carboxamide + (6S)-5,6,7,8-tetrahydrofolate. It catalyses the reaction IMP + H2O = 5-formamido-1-(5-phospho-D-ribosyl)imidazole-4-carboxamide. It participates in purine metabolism; IMP biosynthesis via de novo pathway; 5-formamido-1-(5-phospho-D-ribosyl)imidazole-4-carboxamide from 5-amino-1-(5-phospho-D-ribosyl)imidazole-4-carboxamide (10-formyl THF route): step 1/1. Its pathway is purine metabolism; IMP biosynthesis via de novo pathway; IMP from 5-formamido-1-(5-phospho-D-ribosyl)imidazole-4-carboxamide: step 1/1. The chain is Bifunctional purine biosynthesis protein PurH from Pseudomonas putida (strain ATCC 700007 / DSM 6899 / JCM 31910 / BCRC 17059 / LMG 24140 / F1).